Here is a 758-residue protein sequence, read N- to C-terminus: Inhibitor of nuclear factor kappa-B kinase subunit alpha (758 aa).

The region spanning 15–301 (WVMKERLGTG…LNTDSKQPQC (287 aa)) is the Protein kinase domain. ATP contacts are provided by residues 21–29 (LGTGGFGHV) and lysine 44. Aspartate 145 acts as the Proton acceptor in catalysis. The leucine-zipper stretch occupies residues 456–477 (LLRFNTNLTRYKNMMFSFSQQL). Residues 741-746 (QDWSWT) form an NEMO-binding region.

Belongs to the protein kinase superfamily. Ser/Thr protein kinase family. I-kappa-B kinase subfamily. In terms of assembly, directly interacts with ikbkg/nemo.

The protein resides in the cytoplasm. It is found in the nucleus. It catalyses the reaction L-seryl-[I-kappa-B protein] + ATP = O-phospho-L-seryl-[I-kappa-B protein] + ADP + H(+). Its activity is regulated as follows. Activated when phosphorylated and inactivated when dephosphorylated. In terms of biological role, phosphorylates inhibitors of NF-kappa-B thus leading to the dissociation of the inhibitor/NF-kappa-B complex and ultimately the degradation of the inhibitor. Phosphorylates 'Ser-10' of histone H3 at NF-kappa-B-regulated promoters during inflammatory responses triggered by cytokines. The chain is Inhibitor of nuclear factor kappa-B kinase subunit alpha (chuk) from Danio rerio (Zebrafish).